The following is a 482-amino-acid chain: NAD(+) hydrolase ThsA (482 aa).

Residues 3-281 (EHEQKIMIDR…EEITKRFRCK (279 aa)) enclose the Deacetylase sirtuin-type domain. The NAD(+) site is built by aspartate 112 and histidine 150. Histidine 150 (proton acceptor) is an active-site residue. The segment at 282 to 482 (NVFLSGSAHE…SKIHDVIKLI (201 aa)) is SLOG (STALD) domain. 8 residues coordinate 3'cADPR: glycine 287, serine 288, leucine 324, phenylalanine 355, arginine 373, lysine 390, glycine 407, and glutamate 411.

This sequence belongs to the soluble Thoeris ThsA family. In terms of assembly, homotetramer in solution.

It catalyses the reaction NAD(+) + H2O = ADP-D-ribose + nicotinamide + H(+). With respect to regulation, in vivo probably activated by a cyclic ADP-D-ribose generated by ThsB (might be 3'cADPR). In terms of biological role, NAD(+) hydrolyzing component (NADase) of the Thoeris antiviral defense system, composed of ThsA and ThsB (maybe J591_1492). As purified, has NADase activity that is not activated by any tested cADPR isomers; binds 3'cADPR better than 2'cADPR. It was suggested the purified protein is already in a fully active state. Upon activation binds and hydrolyzes NAD(+), leading to cell death and inhibition of phage replication. This chain is NAD(+) hydrolase ThsA, found in Acinetobacter baumannii (strain 532279).